Here is a 72-residue protein sequence, read N- to C-terminus: Translation initiation factor IF-1 (72 aa).

The S1-like domain occupies 1-72 (MAKEESIKMN…SKGRITYRAR (72 aa)).

This sequence belongs to the IF-1 family. As to quaternary structure, component of the 30S ribosomal translation pre-initiation complex which assembles on the 30S ribosome in the order IF-2 and IF-3, IF-1 and N-formylmethionyl-tRNA(fMet); mRNA recruitment can occur at any time during PIC assembly.

It is found in the cytoplasm. Functionally, one of the essential components for the initiation of protein synthesis. Stabilizes the binding of IF-2 and IF-3 on the 30S subunit to which N-formylmethionyl-tRNA(fMet) subsequently binds. Helps modulate mRNA selection, yielding the 30S pre-initiation complex (PIC). Upon addition of the 50S ribosomal subunit IF-1, IF-2 and IF-3 are released leaving the mature 70S translation initiation complex. This chain is Translation initiation factor IF-1, found in Alkalilimnicola ehrlichii (strain ATCC BAA-1101 / DSM 17681 / MLHE-1).